A 690-amino-acid polypeptide reads, in one-letter code: Ras guanyl-releasing protein 3 (690 aa).

An N-terminal Ras-GEF domain is found at 3–125 (SSGLGKAATL…SLIDISSIPS (123 aa)). One can recognise a Ras-GEF domain in the interval 152–383 (EPIELAEHLT…YKLSLVLEPR (232 aa)). EF-hand domains follow at residues 420–455 (HIRK…FPFL) and 458–484 (FCVL…AKSQ). Ca(2+) is bound by residues aspartate 433, aspartate 435, aspartate 437, tyrosine 439, aspartate 444, aspartate 462, aspartate 464, aspartate 466, and glutamate 473. The segment at 494–544 (IHNFQEMTYLKPTFCEHCAGFLWGIIKQGYKCKDCGANCHKQCKDLLVLAC) adopts a Phorbol-ester/DAG-type zinc-finger fold. Residues 667-690 (VDRGTEFELDQDEGEETRQDGEDG) are disordered.

The protein belongs to the RASGRP family.

Guanine nucleotide exchange factor (GEF) for Ras and Rap1. The polypeptide is Ras guanyl-releasing protein 3 (RASGRP3) (Homo sapiens (Human)).